The following is a 178-amino-acid chain: Caveolin-1 (178 aa).

Ser2 is subject to N-acetylserine. Ser2 is subject to Phosphoserine. A required for homooligomerization region spans residues 2 to 94; that stretch reads SGGKYVDSEG…WKASFTTFTV (93 aa). At 2–104 the chain is on the cytoplasmic side; sequence SGGKYVDSEG…TKYWFYRLLS (103 aa). Position 5 is an N6-acetyllysine; alternate (Lys5). Residue Lys5 forms a Glycyl lysine isopeptide (Lys-Gly) (interchain with G-Cter in ubiquitin); alternate linkage. Tyr6 carries the post-translational modification Phosphotyrosine. Phosphoserine is present on Ser9. The residue at position 14 (Tyr14) is a Phosphotyrosine; by ABL1. Tyr25 bears the Phosphotyrosine mark. Glycyl lysine isopeptide (Lys-Gly) (interchain with G-Cter in ubiquitin) cross-links involve residues Lys26 and Lys30. Ser37 is modified (phosphoserine). Residues Lys39, Lys47, and Lys57 each participate in a glycyl lysine isopeptide (Lys-Gly) (interchain with G-Cter in ubiquitin) cross-link. Residues 82 to 94 form an interaction with CAVIN3 region; sequence DGIWKASFTTFTV. Residues 105 to 125 constitute an intramembrane region (helical); that stretch reads ALFGIPMALIWGIYFAILSFL. The Cytoplasmic portion of the chain corresponds to 126-178; that stretch reads HIWAVVPCIKSFLIEIQCISRVYSIYVHTVCDPLFEAVGKIFSNVRINLQKEI. The interacts with SPRY1, SPRY2, SPRY3 and SPRY4 stretch occupies residues 131-142; it reads VPCIKSFLIEIQ. Residues Cys133, Cys143, and Cys156 are each lipidated (S-palmitoyl cysteine). The segment at 149–160 is interacts with SPRY1, SPRY2, and SPRY4; that stretch reads SIYVHTVCDPLF. Positions 167 to 178 are interacts with SPRY1, SPRY2, SPRY3 and SPRY4; that stretch reads FSNVRINLQKEI.

This sequence belongs to the caveolin family. In terms of assembly, homooligomer. Interacts with GLIPR2. Interacts with NOSTRIN. Interacts with SNAP25 and STX1A. Interacts (via the N-terminus) with DPP4; the interaction is direct. Interacts with CTNNB1, CDH1 and JUP. Interacts with PACSIN2; this interaction induces membrane tubulation. Interacts with SLC7A9. Interacts with BMX and BTK. Interacts with TGFBR1. Interacts with CAVIN3 (via leucine-zipper domain) in a cholesterol-sensitive manner. Interacts with CAVIN1. Interacts with EHD2 in a cholesterol-dependent manner. Forms a ternary complex with UBXN6 and VCP; mediates CAV1 targeting to lysosomes for degradation. Interacts with ABCG1; this interaction regulates ABCG1-mediated cholesterol efflux. Interacts with NEU3; this interaction enhances NEU3 sialidase activity within caveola. Interacts (via C-terminus) with SPRY1, SPRY2 (via C-terminus), SPRY3, and SPRY4. Interacts with IGFBP5; this interaction allows trafficking of IGFBP5 from the plasma membrane to the nucleus. Phosphorylated at Tyr-14 by ABL1 in response to oxidative stress. In terms of processing, ubiquitinated. Undergo monoubiquitination and multi- and/or polyubiquitination. Monoubiquitination of N-terminal lysines promotes integration in a ternary complex with UBXN6 and VCP which promotes oligomeric CAV1 targeting to lysosomes for degradation. Ubiquitinated by ZNRF1; leading to degradation and modulation of the TLR4-mediated immune response.

It localises to the golgi apparatus membrane. The protein resides in the cell membrane. Its subcellular location is the membrane. The protein localises to the caveola. It is found in the membrane raft. May act as a scaffolding protein within caveolar membranes. Forms a stable heterooligomeric complex with CAV2 that targets to lipid rafts and drives caveolae formation. Mediates the recruitment of CAVIN proteins (CAVIN1/2/3/4) to the caveolae. Interacts directly with G-protein alpha subunits and can functionally regulate their activity. Involved in the costimulatory signal essential for T-cell receptor (TCR)-mediated T-cell activation. Its binding to DPP4 induces T-cell proliferation and NF-kappa-B activation in a T-cell receptor/CD3-dependent manner. Recruits CTNNB1 to caveolar membranes and may regulate CTNNB1-mediated signaling through the Wnt pathway. Negatively regulates TGFB1-mediated activation of SMAD2/3 by mediating the internalization of TGFBR1 from membrane rafts leading to its subsequent degradation. Binds 20(S)-hydroxycholesterol (20(S)-OHC). The sequence is that of Caveolin-1 (CAV1) from Pongo abelii (Sumatran orangutan).